The following is a 269-amino-acid chain: 3-methyl-2-oxobutanoate hydroxymethyltransferase (269 aa).

Residues D52 and D91 each contribute to the Mg(2+) site. 3-methyl-2-oxobutanoate-binding positions include 52 to 53, D91, and K121; that span reads DT. E123 provides a ligand contact to Mg(2+). The active-site Proton acceptor is the E186.

Belongs to the PanB family. As to quaternary structure, homodecamer; pentamer of dimers. Mg(2+) serves as cofactor.

The protein localises to the cytoplasm. It catalyses the reaction 3-methyl-2-oxobutanoate + (6R)-5,10-methylene-5,6,7,8-tetrahydrofolate + H2O = 2-dehydropantoate + (6S)-5,6,7,8-tetrahydrofolate. It participates in cofactor biosynthesis; (R)-pantothenate biosynthesis; (R)-pantoate from 3-methyl-2-oxobutanoate: step 1/2. Its function is as follows. Catalyzes the reversible reaction in which hydroxymethyl group from 5,10-methylenetetrahydrofolate is transferred onto alpha-ketoisovalerate to form ketopantoate. The sequence is that of 3-methyl-2-oxobutanoate hydroxymethyltransferase from Rhodopirellula baltica (strain DSM 10527 / NCIMB 13988 / SH1).